The sequence spans 302 residues: 4-hydroxy-tetrahydrodipicolinate synthase (302 aa).

Thr46 contacts pyruvate. Catalysis depends on Tyr134, which acts as the Proton donor/acceptor. Lys162 (schiff-base intermediate with substrate) is an active-site residue. Residue Val204 participates in pyruvate binding.

The protein belongs to the DapA family. As to quaternary structure, homotetramer; dimer of dimers.

Its subcellular location is the cytoplasm. The enzyme catalyses L-aspartate 4-semialdehyde + pyruvate = (2S,4S)-4-hydroxy-2,3,4,5-tetrahydrodipicolinate + H2O + H(+). The protein operates within amino-acid biosynthesis; L-lysine biosynthesis via DAP pathway; (S)-tetrahydrodipicolinate from L-aspartate: step 3/4. Its function is as follows. Catalyzes the condensation of (S)-aspartate-beta-semialdehyde [(S)-ASA] and pyruvate to 4-hydroxy-tetrahydrodipicolinate (HTPA). The protein is 4-hydroxy-tetrahydrodipicolinate synthase of Xanthomonas campestris pv. campestris (strain ATCC 33913 / DSM 3586 / NCPPB 528 / LMG 568 / P 25).